We begin with the raw amino-acid sequence, 230 residues long: Large ribosomal subunit protein uL3 (230 aa).

Disordered regions lie at residues 125–149 and 210–230; these read QAIGPRSHGGGGGSKPIRQTGSLGD and PNPKNPVSLFVPNSDKEVKNE.

The protein belongs to the universal ribosomal protein uL3 family. As to quaternary structure, part of the 50S ribosomal subunit. Forms a cluster with proteins L14 and L19.

One of the primary rRNA binding proteins, it binds directly near the 3'-end of the 23S rRNA, where it nucleates assembly of the 50S subunit. In Mesomycoplasma hyopneumoniae (strain 232) (Mycoplasma hyopneumoniae), this protein is Large ribosomal subunit protein uL3.